The chain runs to 544 residues: MSAKEIKFSTDARAHLLRGVELLNNAVKVTLGPKGRNVVIDKAYGAPRITKDGVTVAREIELGNKFENMGAQMVREVASKTNDLAGDGTTTATVLAASIFREGAKLVAAGMNPMDLRRGIDLGVSAIVKEIQARARKVKSSGEIAQVGAIAANGDATVGEMIAKAMEKVGNEGVITVEEARTAETELDVVEGMQFDRGYLSPYFVTNAEKMRVELEDPYILLHEKKLGSLQALLPILEAVVQTGKPLLLISEDVEGEALATLVVNKLRGGLKVAAVKAPGFGDRRKAMLEDIAALTSGQMISEDLGIKLENVTLYMLGRAKRVLIEKDTTTIIDGTGEKAAIQARIQQMKAQIEETTSDYDKEKLQERLAKLAGGVAVIRVGGATETEVKEKKDRIEDALNATRAAVEEGIVPGGGVALLRAKSALTGMVGENADVTAGISIVLRALEAPIRQIAENAGFEGSIIVGRLTGRNDHNQGFDAQTETYVDMVEAGIVDPAKVVRTALQDAGSIAALLITAEVMIADIPARNPAPAVGNGGMGDMGY.

ATP contacts are provided by residues Thr30–Pro33, Lys51, Asp87–Thr91, Gly415, and Asp496.

This sequence belongs to the chaperonin (HSP60) family. As to quaternary structure, forms a cylinder of 14 subunits composed of two heptameric rings stacked back-to-back. Interacts with the co-chaperonin GroES.

Its subcellular location is the cytoplasm. The enzyme catalyses ATP + H2O + a folded polypeptide = ADP + phosphate + an unfolded polypeptide.. In terms of biological role, together with its co-chaperonin GroES, plays an essential role in assisting protein folding. The GroEL-GroES system forms a nano-cage that allows encapsulation of the non-native substrate proteins and provides a physical environment optimized to promote and accelerate protein folding. The protein is Chaperonin GroEL 3 of Rhizobium etli (strain ATCC 51251 / DSM 11541 / JCM 21823 / NBRC 15573 / CFN 42).